The primary structure comprises 511 residues: Acetylcholine receptor subunit alpha-type unc-38 (511 aa).

The first 16 residues, Met1–Ser16, serve as a signal peptide directing secretion. At Phe17 to Thr261 the chain is on the extracellular side. Asn124 carries an N-linked (GlcNAc...) asparagine glycan. An intrachain disulfide couples Cys151 to Cys165. Asn202 carries N-linked (GlcNAc...) asparagine glycosylation. Cys238 and Cys239 form a disulfide bridge. A run of 3 helical transmembrane segments spans residues Val262–Pro282, Leu291–Pro311, and Leu324–Leu344. At His345–Arg464 the chain is on the cytoplasmic side. Residues Leu465 to Ala485 form a helical membrane-spanning segment.

Belongs to the ligand-gated ion channel (TC 1.A.9) family. Acetylcholine receptor (TC 1.A.9.1) subfamily. As to quaternary structure, component of nicotinic acetylcholine receptor. In muscles, composed of 2 non-alpha subunits lev-1 and unc-29, and 3 alpha subunits unc-38, unc-63 and lev-8. In cholinergic motoneurons, composed of 2 non-alpha subunits acr-2 and acr-3, and 3 alpha subunits unc-38, unc-63 and acr-12.

The protein localises to the postsynaptic cell membrane. Its subcellular location is the cell membrane. Alpha subunit of nicotinic acetylcholine receptor (nAChR). Probably acts in cholinergic motoneurons to regulate presynaptic neurotransmitter release, thereby ensuring normal level of excitation of cholinergic motoneurons during locomotion. Involved in nAChR sensitivity to nicotine. The sequence is that of Acetylcholine receptor subunit alpha-type unc-38 (unc-38) from Caenorhabditis elegans.